Here is a 529-residue protein sequence, read N- to C-terminus: Sodium/hydrogen exchanger 4 (529 aa).

The Cytoplasmic portion of the chain corresponds to 1–19 (MSIGLTEFVTNKLAAEHPQ). Residues 20–40 (VIPISVFIAILCLCLVIGHLL) form a helical membrane-spanning segment. Residues 41–45 (EENRW) lie on the Vacuolar side of the membrane. A helical transmembrane segment spans residues 46–66 (VNESITAILVGAASGTVILLI). At 67-73 (SKGKSSH) the chain is on the cytoplasmic side. Positions 74-94 (ILVFDEELFFIYLLPPIIFNA) form an intramembrane region, helical. Residues 95-112 (GFQVKKKKFFHNFLTIMS) lie on the Cytoplasmic side of the membrane. A helical membrane pass occupies residues 113 to 133 (FGVIGVFISTVIISFGTWWLF). Residues 134–171 (PKLGFKGLSARDYLAIGTIFSSTDTVCTLQILHQDETP) lie on the Vacuolar side of the membrane. Residues 172–192 (LLYSLVFGEGVVNDATSVVLF) traverse the membrane as a helical segment. Residues 193 to 214 (NAVQKIQFESLTGWTALQVFGN) are Cytoplasmic-facing. A helical membrane pass occupies residues 215-235 (FLYLFSTSTLLGIGVGLITSF). Residues 236–250 (VLKTLYFGRHSTTRE) lie on the Vacuolar side of the membrane. Residues 251 to 267 (LAIMVLMAYLSYMLAEL) form a helical membrane-spanning segment. Residues 268 to 273 (FSLSGI) are Cytoplasmic-facing. A helical membrane pass occupies residues 274 to 291 (LTVFFCGVLMSHYASYNV). Over 292-301 (TESSRITSRH) the chain is Vacuolar. Residues 302–322 (VFAMLSFIAETFIFLYVGTDA) form a helical membrane-spanning segment. Topologically, residues 323 to 342 (LDFTKWKTSSLSFGGTLGVS) are cytoplasmic. A helical membrane pass occupies residues 343 to 363 (GVITALVLLGRAAFVFPLSVL). Topologically, residues 364–380 (TNFMNRHTERNESITFK) are vacuolar. N-linked (GlcNAc...) asparagine glycosylation occurs at asparagine 374. Residues 381–401 (HQVIIWWAGLMRGAVSIALAF) form a helical membrane-spanning segment. Over 402–415 (KQFTYSGVTLDPVN) the chain is Cytoplasmic. Residues 416 to 436 (AAMVTNTTIVVLFTTLVFGFL) traverse the membrane as a helical segment. Over 437 to 529 (TKPLVNYLLP…GPRRENQPEC (93 aa)) the chain is Vacuolar.

Belongs to the monovalent cation:proton antiporter 1 (CPA1) transporter (TC 2.A.36) family. Expressed at very low levels in roots and shoots.

The protein localises to the vacuole membrane. The catalysed reaction is Na(+)(in) + H(+)(out) = Na(+)(out) + H(+)(in). It catalyses the reaction K(+)(in) + H(+)(out) = K(+)(out) + H(+)(in). May act in low affinity electroneutral exchange of protons for cations such as Na(+) or K(+) across membranes. May also exchange Li(+) and Cs(+) with a lower affinity. This Arabidopsis thaliana (Mouse-ear cress) protein is Sodium/hydrogen exchanger 4 (NHX4).